The primary structure comprises 425 residues: Nuclear hormone receptor family member nhr-13 (425 aa).

Positions Pro-5 to Ser-83 form a DNA-binding region, nuclear receptor. 2 NR C4-type zinc fingers span residues Cys-11–Cys-30 and Cys-46–Cys-71. Positions Val-108–Asn-148 are disordered. The segment covering Glu-113 to Asn-130 has biased composition (acidic residues). Over residues Glu-131 to Glu-142 the composition is skewed to low complexity. Residues Glu-147 to Trp-414 form the NR LBD domain.

This sequence belongs to the nuclear hormone receptor family. May interact with nuclear hormone receptor nhr-49.

It localises to the nucleus. Functionally, orphan nuclear receptor. Involved in regulating fatty acid desaturase genes, acting in concert with nuclear hormone receptor nhr-49. This Caenorhabditis elegans protein is Nuclear hormone receptor family member nhr-13 (nhr-13).